The sequence spans 157 residues: Iron-sulfur cluster repair protein DnrN (157 aa).

Belongs to the RIC family.

Its subcellular location is the cytoplasm. Di-iron-containing protein involved in the repair of iron-sulfur clusters damaged by oxidative and nitrosative stress conditions. Required to repair damage caused by nitric oxide to FNR and NsrR transcription factors. The sequence is that of Iron-sulfur cluster repair protein DnrN (dnrN) from Neisseria gonorrhoeae.